The following is a 170-amino-acid chain: Large ribosomal subunit protein uL10 (170 aa).

It belongs to the universal ribosomal protein uL10 family. In terms of assembly, part of the ribosomal stalk of the 50S ribosomal subunit. The N-terminus interacts with L11 and the large rRNA to form the base of the stalk. The C-terminus forms an elongated spine to which L12 dimers bind in a sequential fashion forming a multimeric L10(L12)X complex.

In terms of biological role, forms part of the ribosomal stalk, playing a central role in the interaction of the ribosome with GTP-bound translation factors. This Fusobacterium nucleatum subsp. nucleatum (strain ATCC 25586 / DSM 15643 / BCRC 10681 / CIP 101130 / JCM 8532 / KCTC 2640 / LMG 13131 / VPI 4355) protein is Large ribosomal subunit protein uL10.